The sequence spans 439 residues: Cell division protein FtsA (439 aa).

This sequence belongs to the FtsA/MreB family. In terms of assembly, self-interacts. Interacts with FtsZ.

The protein resides in the cell inner membrane. Cell division protein that is involved in the assembly of the Z ring. May serve as a membrane anchor for the Z ring. The chain is Cell division protein FtsA from Shigella flexneri.